Here is a 335-residue protein sequence, read N- to C-terminus: MNELIDGPKCASEGIVNAMTSIPVKISFLIIATVIFLSFYFARLAILALLRNNIFSNSTQRILLVCLVNSVFHQAATLEIRIHQVYRSFVYASDPCSLLFHFTECEVELYFYYLTNYFSTYSVFSLTFDRLISHYNPRFYFSQQNFVSNTLLIIQCLLSFGTYYVGLYGVPPFGYVSICYYTPKYAVNFLKINDFRTVVMVFCIIVIIFVYYLSVRSEKQIQRTSYSPGERYWAYENVETSQSVCILIVLQFACILMSSYGVNYIRSKESMMSEEDFHTLAPFFAGVTYASLCLPLVIYFKTKLTIRNRRIRIAVMTSMYGDVGDHMNRLKKSWE.

The next 5 helical transmembrane spans lie at 22 to 42 (IPVK…FYFA), 151 to 171 (LLII…YGVP), 195 to 215 (FRTV…YLSV), 245 to 265 (CILI…VNYI), and 280 to 300 (LAPF…VIYF).

It belongs to the nematode receptor-like protein sra family.

It localises to the membrane. The chain is Serpentine receptor class alpha-25 (sra-25) from Caenorhabditis elegans.